A 370-amino-acid chain; its full sequence is DNA replication and repair protein RecF (370 aa).

30–37 (GQNGMGKT) is a binding site for ATP.

Belongs to the RecF family.

It is found in the cytoplasm. The RecF protein is involved in DNA metabolism; it is required for DNA replication and normal SOS inducibility. RecF binds preferentially to single-stranded, linear DNA. It also seems to bind ATP. The polypeptide is DNA replication and repair protein RecF (Bacteroides fragilis (strain YCH46)).